Consider the following 293-residue polypeptide: 4-hydroxy-tetrahydrodipicolinate synthase (293 aa).

Pyruvate is bound at residue Thr44. Tyr132 acts as the Proton donor/acceptor in catalysis. Lys161 (schiff-base intermediate with substrate) is an active-site residue. A pyruvate-binding site is contributed by Ile203.

The protein belongs to the DapA family. Homotetramer; dimer of dimers.

Its subcellular location is the cytoplasm. The enzyme catalyses L-aspartate 4-semialdehyde + pyruvate = (2S,4S)-4-hydroxy-2,3,4,5-tetrahydrodipicolinate + H2O + H(+). The protein operates within amino-acid biosynthesis; L-lysine biosynthesis via DAP pathway; (S)-tetrahydrodipicolinate from L-aspartate: step 3/4. In terms of biological role, catalyzes the condensation of (S)-aspartate-beta-semialdehyde [(S)-ASA] and pyruvate to 4-hydroxy-tetrahydrodipicolinate (HTPA). The chain is 4-hydroxy-tetrahydrodipicolinate synthase from Persephonella marina (strain DSM 14350 / EX-H1).